The sequence spans 317 residues: Putative cuticle collagen 80 (317 aa).

The tract at residues 80 to 262 is disordered; that stretch reads CNCGPQASNC…GAPGNDGAPG (183 aa). 3 triple-helical region regions span residues 92–124, 137–199, and 202–264; these read GPPGPPGASGDRGLDGQPGPAGKPGQPGVAGPA, GAPG…SGQR, and GLPG…PGSD. 3 stretches are compositionally biased toward low complexity: residues 108–124, 135–145, and 175–206; these read QPGPAGKPGQPGVAGPA, PQGAPGPAGAP, and AGDAGSPGQAGAPGNPGRPGQSGQRSRGLPGP. Pro residues-rich tracts occupy residues 207 to 219 and 230 to 240; these read SGRPGPQGPPGAP and PAGPPGPPGPN. Residues 242–262 show a composition bias toward low complexity; it reads QPGHPGQDGQPGAPGNDGAPG.

The protein belongs to the cuticular collagen family. Collagen polypeptide chains are complexed within the cuticle by disulfide bonds and other types of covalent cross-links.

Its function is as follows. Nematode cuticles are composed largely of collagen-like proteins. The cuticle functions both as an exoskeleton and as a barrier to protect the worm from its environment. This Caenorhabditis elegans protein is Putative cuticle collagen 80 (col-80).